Reading from the N-terminus, the 279-residue chain is MSIISPQDVKKLREETNAGFGDCKKALSVAGGDFELAKKKLREMGIASAEKRLDRDAKEGRVFSYSNNIHAGLLLVSCETDFVALNHNFVNFGNSLIKELVESGRNSLATSQELELKNLAATIKENIQVKKIFITEIQSNEFVKIYLHGEQSKIGVLVKLKVDDFSKTEDKMLQDFAMDLALHVAALAPIYLRNDDVCPNYIKEQEEIFAKQLELSGKSESIVKGIVAGKIKKHLAEISLLEQGFVKNDKLTVREMLEEVSKAISSKIEIVEFKYLRIG.

The tract at residues 80–83 (TDFV) is involved in Mg(2+) ion dislocation from EF-Tu.

It belongs to the EF-Ts family.

Its subcellular location is the cytoplasm. Its function is as follows. Associates with the EF-Tu.GDP complex and induces the exchange of GDP to GTP. It remains bound to the aminoacyl-tRNA.EF-Tu.GTP complex up to the GTP hydrolysis stage on the ribosome. This is Elongation factor Ts from Borreliella burgdorferi (strain ZS7) (Borrelia burgdorferi).